A 173-amino-acid chain; its full sequence is Probable transcription termination protein NusA (173 aa).

In terms of domain architecture, KH spans 31-97; it reads DEKIVFVVKE…EDVWVKKFGN (67 aa). The span at 147–162 shows a compositional bias: basic and acidic residues; the sequence is ADNRPKKDEIPEKAAE. The tract at residues 147 to 173 is disordered; it reads ADNRPKKDEIPEKAAESSENVQAEENQ. The span at 163 to 173 shows a compositional bias: polar residues; the sequence is SSENVQAEENQ.

It belongs to the NusA family.

The protein resides in the cytoplasm. Functionally, participates in transcription termination. The sequence is that of Probable transcription termination protein NusA from Methanococcus vannielii (strain ATCC 35089 / DSM 1224 / JCM 13029 / OCM 148 / SB).